Reading from the N-terminus, the 195-residue chain is COMM domain-containing protein 3 (195 aa).

A COMM domain is found at 124-193 (HITDVSWRLE…DASKSLERAT (70 aa)).

The protein belongs to the COMM domain-containing protein 3 family. As to quaternary structure, component of the commander complex consisting of the CCC subcomplex and the retriever subcomplex. Component of the CCC (COMMD/CCDC22/CCDC93) subcomplex consisting of COMMD1, COMMD2, COMMD3, COMMD4, COMMD5, COMMD6, COMMD7, COMMD8, COMMD9, COMMD10, CCDC22 and CCDC93; within the complex forms a heterodimer with COMMD2. Interacts with NFKB1/p105. Interacts with CCDC22, CCDC93, SCNN1B, CUL3, CUL4A, CUL4B, CUL5. In terms of tissue distribution, expressed in kidney collecting duct cells and in the nuclei of proximal convoluted tubule cells in the kidney cortex (at protein level).

It localises to the cytoplasm. The protein localises to the nucleus. Functionally, scaffold protein in the commander complex that is essential for endosomal recycling of transmembrane cargos; the commander complex is composed of the CCC subcomplex and the retriever subcomplex. May modulate activity of cullin-RING E3 ubiquitin ligase (CRL) complexes. May down-regulate activation of NF-kappa-B. Modulates Na(+) transport in epithelial cells by regulation of apical cell surface expression of amiloride-sensitive sodium channel (ENaC) subunits. The polypeptide is COMM domain-containing protein 3 (Commd3) (Rattus norvegicus (Rat)).